Here is a 343-residue protein sequence, read N- to C-terminus: F17g-G fimbrial adhesin (343 aa).

Residues methionine 1–alanine 22 form the signal peptide. Residues alanine 23–valine 199 form a receptor-binding lectin domain region. A carbohydrate is bound by residues alanine 65 to asparagine 66, aspartate 110 to threonine 111, and serine 138 to glycine 141. A disulfide bridge links cysteine 75 with cysteine 132. Residues threonine 200 to glutamine 343 are fimbrillin-binding domain. Positions leucine 287 to glycine 307 are disordered. Positions asparagine 298–glycine 307 are enriched in polar residues.

Belongs to the fimbrial protein family.

The protein resides in the fimbrium. In terms of biological role, essential fimbrial adhesion factor that mediates binding to N-acetylglucosamine-containing receptors in the host intestinal microvilli, leading to colonization of the intestinal tissue, and diarrhea or septicemia. Also confers adhesiveness to laminin and basement membranes. May be involved in the initiation of polymerization of fimbrillin monomers during fimbrial filament biogenesis. This Escherichia coli protein is F17g-G fimbrial adhesin (f17gG).